Consider the following 476-residue polypeptide: Bifunctional protein HldE (476 aa).

The interval Met1–Ser319 is ribokinase. Asn195–Glu198 lines the ATP pocket. Asp264 is an active-site residue. The cytidylyltransferase stretch occupies residues Met345–Gln476.

This sequence in the N-terminal section; belongs to the carbohydrate kinase PfkB family. The protein in the C-terminal section; belongs to the cytidylyltransferase family. As to quaternary structure, homodimer.

It carries out the reaction D-glycero-beta-D-manno-heptose 7-phosphate + ATP = D-glycero-beta-D-manno-heptose 1,7-bisphosphate + ADP + H(+). The enzyme catalyses D-glycero-beta-D-manno-heptose 1-phosphate + ATP + H(+) = ADP-D-glycero-beta-D-manno-heptose + diphosphate. It participates in nucleotide-sugar biosynthesis; ADP-L-glycero-beta-D-manno-heptose biosynthesis; ADP-L-glycero-beta-D-manno-heptose from D-glycero-beta-D-manno-heptose 7-phosphate: step 1/4. It functions in the pathway nucleotide-sugar biosynthesis; ADP-L-glycero-beta-D-manno-heptose biosynthesis; ADP-L-glycero-beta-D-manno-heptose from D-glycero-beta-D-manno-heptose 7-phosphate: step 3/4. Catalyzes the phosphorylation of D-glycero-D-manno-heptose 7-phosphate at the C-1 position to selectively form D-glycero-beta-D-manno-heptose-1,7-bisphosphate. Functionally, catalyzes the ADP transfer from ATP to D-glycero-beta-D-manno-heptose 1-phosphate, yielding ADP-D-glycero-beta-D-manno-heptose. This Shewanella sp. (strain W3-18-1) protein is Bifunctional protein HldE.